We begin with the raw amino-acid sequence, 367 residues long: Secondary metabolism regulator laeA (367 aa).

The tract at residues M1 to N82 is disordered. The span at L19–M41 shows a compositional bias: polar residues. 2 stretches are compositionally biased toward basic and acidic residues: residues T47–P56 and K71–N82.

This sequence belongs to the methyltransferase superfamily. LaeA methyltransferase family. In terms of assembly, component of the heterotrimeric velvet complex composed of laeA, veA and velB; VeA acting as a bridging protein between laeA and velB.

The protein localises to the nucleus. The catalysed reaction is L-methionyl-[protein] + S-adenosyl-L-methionine = S-methyl-L-methionyl-[protein] + S-adenosyl-L-homocysteine. In terms of biological role, methyltransferase that performs automethylation. No other methyl-accepting substrate has been identified yet. Component of the velvet transcription factor complex that acts as a global regulator for secondary metabolite gene expression. Controls the expression of the monacolin K gene clusters. Also regulates pigmentation. The polypeptide is Secondary metabolism regulator laeA (Monascus pilosus (Red mold)).